The sequence spans 248 residues: UPF0246 protein RAF_ORF0648 (248 aa).

It belongs to the UPF0246 family.

The polypeptide is UPF0246 protein RAF_ORF0648 (Rickettsia africae (strain ESF-5)).